A 452-amino-acid chain; its full sequence is C4-dicarboxylate transport protein 1 (452 aa).

Helical transmembrane passes span 18–38 (FQVV…PSVG), 51–71 (LIKM…IAGM), 83–103 (LALL…LLLV), 151–171 (AFAK…GFAL), 191–211 (VLFT…FGAM), 229–249 (LMGA…GAIA), 304–324 (GYSF…VFIA), 337–357 (ITLL…TGSG), and 359–379 (IVLA…LALI). The segment at 426 to 452 (WEEAQEPERVLDKKTEHMPVSAMSDAG) is disordered. Residues 431–442 (EPERVLDKKTEH) show a composition bias toward basic and acidic residues.

This sequence belongs to the dicarboxylate/amino acid:cation symporter (DAACS) (TC 2.A.23) family.

The protein localises to the cell inner membrane. In terms of biological role, responsible for the transport of dicarboxylates such as succinate, fumarate, and malate from the periplasm across the membrane. This Polaromonas naphthalenivorans (strain CJ2) protein is C4-dicarboxylate transport protein 1.